We begin with the raw amino-acid sequence, 117 residues long: MSMRANRVGEQMKKELGDIISRKLKDPRIGFLTVTDVRVSGDLQIAKVYISVLGDEKKREEALKGLAKAKGFIRSEIGSRIRLRKTPEIEFEFDESIDYGNRIETLIHELHSEKPSE.

Belongs to the RbfA family. Monomer. Binds 30S ribosomal subunits, but not 50S ribosomal subunits or 70S ribosomes.

The protein resides in the cytoplasm. Functionally, one of several proteins that assist in the late maturation steps of the functional core of the 30S ribosomal subunit. Associates with free 30S ribosomal subunits (but not with 30S subunits that are part of 70S ribosomes or polysomes). Required for efficient processing of 16S rRNA. May interact with the 5'-terminal helix region of 16S rRNA. This chain is Ribosome-binding factor A, found in Bacillus subtilis (strain 168).